We begin with the raw amino-acid sequence, 382 residues long: Fetuin-B (382 aa).

The signal sequence occupies residues 1–15; that stretch reads MGLLLPLALCILVLC. 2 consecutive Cystatin fetuin-B-type domains span residues 25–138 and 149–255; these read ALNP…YNCT and MTCP…VTCD. N-linked (GlcNAc...) asparagine glycosylation is present at N37. 3 disulfides stabilise this stretch: C93–C104, C117–C137, and C151–C154. N136 carries N-linked (GlcNAc...) asparagine glycosylation. An N-linked (GlcNAc...) asparagine glycan is attached at N182. Disulfide bonds link C216/C224 and C237/C254. Polar residues-rich tracts occupy residues 262–276 and 286–295; these read PATG…QKPT and QKNTPPTDSP. Disordered stretches follow at residues 262–320 and 363–382; these read PATG…EKGP and ARTA…VLPP. Residues T289 and T292 are each glycosylated (O-linked (GalNAc...) threonine). The span at 310 to 320 shows a compositional bias: basic and acidic residues; it reads LDDKNSQEKGP. S315 is modified (phosphoserine).

Belongs to the fetuin family. In terms of tissue distribution, liver and testis.

The protein resides in the secreted. In terms of biological role, protease inhibitor required for egg fertilization. Required to prevent premature zona pellucida hardening before fertilization, probably by inhibiting the protease activity of ASTL, a protease that mediates the cleavage of ZP2 and triggers zona pellucida hardening. This chain is Fetuin-B (FETUB), found in Homo sapiens (Human).